The sequence spans 576 residues: NADH-quinone oxidoreductase subunit C/D (576 aa).

The NADH dehydrogenase I subunit C stretch occupies residues 1-176; sequence MAWISLEKAK…NLEGLFNYDR (176 aa). The NADH dehydrogenase I subunit D stretch occupies residues 200–576; that stretch reads SQIVLNWGPL…IDPVVGETDR (377 aa).

The protein in the N-terminal section; belongs to the complex I 30 kDa subunit family. This sequence in the C-terminal section; belongs to the complex I 49 kDa subunit family. As to quaternary structure, NDH-1 is composed of 13 different subunits. Subunits NuoB, CD, E, F, and G constitute the peripheral sector of the complex.

The protein resides in the cell inner membrane. The catalysed reaction is a quinone + NADH + 5 H(+)(in) = a quinol + NAD(+) + 4 H(+)(out). Functionally, NDH-1 shuttles electrons from NADH, via FMN and iron-sulfur (Fe-S) centers, to quinones in the respiratory chain. The immediate electron acceptor for the enzyme in this species is believed to be ubiquinone. Couples the redox reaction to proton translocation (for every two electrons transferred, four hydrogen ions are translocated across the cytoplasmic membrane), and thus conserves the redox energy in a proton gradient. This chain is NADH-quinone oxidoreductase subunit C/D, found in Sulfurihydrogenibium sp. (strain YO3AOP1).